The primary structure comprises 465 residues: Iron-sulfur cluster assembly SufBD family protein SAR0880 (465 aa).

The protein belongs to the iron-sulfur cluster assembly SufBD family.

This Staphylococcus aureus (strain MRSA252) protein is Iron-sulfur cluster assembly SufBD family protein SAR0880.